We begin with the raw amino-acid sequence, 457 residues long: Siroheme synthase (457 aa).

The precorrin-2 dehydrogenase /sirohydrochlorin ferrochelatase stretch occupies residues 1–204 (MDHLPIFCQL…ADEKAVNATT (204 aa)). NAD(+)-binding positions include 22-23 (DV) and 43-44 (LT). At Ser128 the chain carries Phosphoserine. Positions 216-457 (GEVVLVGAGP…RDKLNWFSNY (242 aa)) are uroporphyrinogen-III C-methyltransferase. Pro225 is an S-adenosyl-L-methionine binding site. Residue Asp248 is the Proton acceptor of the active site. The active-site Proton donor is Lys270. S-adenosyl-L-methionine is bound by residues 301 to 303 (GGD), Ile306, 331 to 332 (TA), Met382, and Gly411.

This sequence in the N-terminal section; belongs to the precorrin-2 dehydrogenase / sirohydrochlorin ferrochelatase family. The protein in the C-terminal section; belongs to the precorrin methyltransferase family.

It catalyses the reaction uroporphyrinogen III + 2 S-adenosyl-L-methionine = precorrin-2 + 2 S-adenosyl-L-homocysteine + H(+). The enzyme catalyses precorrin-2 + NAD(+) = sirohydrochlorin + NADH + 2 H(+). The catalysed reaction is siroheme + 2 H(+) = sirohydrochlorin + Fe(2+). It participates in cofactor biosynthesis; adenosylcobalamin biosynthesis; precorrin-2 from uroporphyrinogen III: step 1/1. Its pathway is cofactor biosynthesis; adenosylcobalamin biosynthesis; sirohydrochlorin from precorrin-2: step 1/1. It functions in the pathway porphyrin-containing compound metabolism; siroheme biosynthesis; precorrin-2 from uroporphyrinogen III: step 1/1. The protein operates within porphyrin-containing compound metabolism; siroheme biosynthesis; siroheme from sirohydrochlorin: step 1/1. It participates in porphyrin-containing compound metabolism; siroheme biosynthesis; sirohydrochlorin from precorrin-2: step 1/1. Multifunctional enzyme that catalyzes the SAM-dependent methylations of uroporphyrinogen III at position C-2 and C-7 to form precorrin-2 via precorrin-1. Then it catalyzes the NAD-dependent ring dehydrogenation of precorrin-2 to yield sirohydrochlorin. Finally, it catalyzes the ferrochelation of sirohydrochlorin to yield siroheme. This is Siroheme synthase from Salmonella dublin (strain CT_02021853).